The primary structure comprises 122 residues: Probable glycine cleavage system H protein (122 aa).

The Lipoyl-binding domain occupies 23–104; sequence IATVGITDYA…PYGNWLVKMK (82 aa). Lys-64 is modified (N6-lipoyllysine).

The protein belongs to the GcvH family. The glycine cleavage system is composed of four proteins: P, T, L and H. (R)-lipoate serves as cofactor.

The glycine cleavage system catalyzes the degradation of glycine. The H protein shuttles the methylamine group of glycine from the P protein to the T protein. This Thermoplasma volcanium (strain ATCC 51530 / DSM 4299 / JCM 9571 / NBRC 15438 / GSS1) protein is Probable glycine cleavage system H protein.